A 163-amino-acid chain; its full sequence is Nucleotide-binding protein AM1_1863 (163 aa).

This sequence belongs to the YajQ family.

Nucleotide-binding protein. This Acaryochloris marina (strain MBIC 11017) protein is Nucleotide-binding protein AM1_1863.